A 60-amino-acid polypeptide reads, in one-letter code: Large ribosomal subunit protein bL32 (60 aa).

It belongs to the bacterial ribosomal protein bL32 family.

The polypeptide is Large ribosomal subunit protein bL32 (Streptococcus sanguinis (strain SK36)).